A 179-amino-acid polypeptide reads, in one-letter code: TM2 domain-containing protein Y66D12A.21 (179 aa).

Positions M1 to A18 are cleaved as a signal peptide. Residues T19–C82 lie on the Extracellular side of the membrane. N75 is a glycosylation site (N-linked (GlcNAc...) asparagine). The chain crosses the membrane as a helical span at residues H83–I105. The TM2 domain occupies V88–I135. Topologically, residues D106–Y109 are cytoplasmic. Residues L110–V132 form a helical membrane-spanning segment. Residues D133–L179 are Extracellular-facing. Residue N169 is glycosylated (N-linked (GlcNAc...) asparagine).

The protein belongs to the TM2 family.

It localises to the membrane. The protein is TM2 domain-containing protein Y66D12A.21 of Caenorhabditis elegans.